We begin with the raw amino-acid sequence, 360 residues long: Alanine racemase (360 aa).

Lysine 36 serves as the catalytic Proton acceptor; specific for D-alanine. N6-(pyridoxal phosphate)lysine is present on lysine 36. Arginine 132 is a binding site for substrate. Tyrosine 256 (proton acceptor; specific for L-alanine) is an active-site residue. Substrate is bound at residue methionine 304.

The protein belongs to the alanine racemase family. Requires pyridoxal 5'-phosphate as cofactor.

The catalysed reaction is L-alanine = D-alanine. The protein operates within amino-acid biosynthesis; D-alanine biosynthesis; D-alanine from L-alanine: step 1/1. Catalyzes the interconversion of L-alanine and D-alanine. May also act on other amino acids. The protein is Alanine racemase (alr) of Haemophilus influenzae (strain ATCC 51907 / DSM 11121 / KW20 / Rd).